The sequence spans 572 residues: Alpha-1D adrenergic receptor (572 aa).

A disordered region spans residues 1 to 77 (MTFRDLLSVS…SAGEPGSAGA (77 aa)). The Extracellular portion of the chain corresponds to 1–95 (MTFRDLLSVS…AVGGLVVSAQ (95 aa)). Gly residues-rich tracts occupy residues 23–33 (SSAGGGGGSAG) and 42–61 (AVGG…GAGS). 2 N-linked (GlcNAc...) asparagine glycosylation sites follow: Asn-65 and Asn-82. The helical transmembrane segment at 96–121 (GVGVGVFLAAFILMAVAGNLLVILSV) threads the bilayer. At 122–133 (ACNRHLQTVTNY) the chain is on the cytoplasmic side. A helical membrane pass occupies residues 134–159 (FIVNLAVADLLLSATVLPFSATMEVL). The Extracellular segment spans residues 160–169 (GFWAFGRAFC). The chain crosses the membrane as a helical span at residues 170–192 (DVWAAVDVLCCTASILSLCTISV). Topologically, residues 193-213 (DRYVGVRHSLKYPAIMTERKA) are cytoplasmic. Residues 214–238 (AAILALLWVVALVVSVGPLLGWKEP) form a helical membrane-spanning segment. Residues 239–251 (VPPDERFCGITEE) are Extracellular-facing. The helical transmembrane segment at 252 to 275 (AGYAVFSSVCSFYLPMAVIVVMYC) threads the bilayer. Residues 276–348 (RVYVVARSTT…KFSREKKAAK (73 aa)) lie on the Cytoplasmic side of the membrane. A helical transmembrane segment spans residues 349–373 (TLAIVVGVFVLCWFPFFFVLPLGSL). The Extracellular portion of the chain corresponds to 374–380 (FPQLKPS). A helical transmembrane segment spans residues 381-405 (EGVFKVIFWLGYFNSCVNPLIYPCS). Residues 406–572 (SREFKRAFLR…DYSNLRETDI (167 aa)) lie on the Cytoplasmic side of the membrane. Cys-419 is lipidated: S-palmitoyl cysteine. The interval 444 to 488 (GLRQDCAPSSGDAPPGAPLALTALPDPDPEPPGTPEMQAPVASRR) is disordered. Residues 450-468 (APSSGDAPPGAPLALTALP) show a composition bias toward low complexity.

This sequence belongs to the G-protein coupled receptor 1 family. Adrenergic receptor subfamily. ADRA1D sub-subfamily. In terms of assembly, interacts with FLNA (via filamin repeat 21); increases PKA-mediated phosphorylation of FLNA. In terms of processing, palmitoylated. Palmitoylation by ZDHHC21 may increase the expression of the receptor and regulate downstream signaling.

It is found in the cell membrane. This alpha-adrenergic receptor mediates its effect through the influx of extracellular calcium. The sequence is that of Alpha-1D adrenergic receptor (ADRA1D) from Homo sapiens (Human).